The sequence spans 626 residues: Janus kinase and microtubule-interacting protein 1 (626 aa).

A mediates association with microtubules region spans residues 1-365; it reads MSKKGRSKGE…KIKNLTRENV (365 aa). Coiled coils occupy residues 19–254 and 284–413; these read VQMA…REAE and ERDV…DDLS. The segment at 365-626 is mediates interaction with TYK2 and GABBR1; the sequence is VEMKEKLSAQ…ILFEPKLKFM (262 aa). Ser-382 carries the post-translational modification Phosphoserine. Polar residues predominate over residues 452-461; it reads ETLSETSCNT. Residues 452-480 form a disordered region; it reads ETLSETSCNTDRTDRAPATPEEDLDDTTT. A Phosphothreonine modification is found at Thr-470. Residues 490–604 adopt a coiled-coil conformation; that stretch reads QLTREYQALQ…EFRVLELEVR (115 aa).

The protein belongs to the JAKMIP family. Homodimer. Forms a complex with GABBR1 and KIF5B/kinesin-1. Interacts with JAK1 and TYK2. In terms of processing, phosphorylated.

It localises to the cytoplasm. The protein resides in the cytoskeleton. Its subcellular location is the membrane. Associates with microtubules and may play a role in the microtubule-dependent transport of the GABA-B receptor. May play a role in JAK1 signaling and regulate microtubule cytoskeleton rearrangements. This chain is Janus kinase and microtubule-interacting protein 1 (JAKMIP1), found in Bos taurus (Bovine).